Here is a 155-residue protein sequence, read N- to C-terminus: Ribosome maturation factor RimP (155 aa).

It belongs to the RimP family.

The protein resides in the cytoplasm. Required for maturation of 30S ribosomal subunits. The polypeptide is Ribosome maturation factor RimP (Staphylococcus epidermidis (strain ATCC 35984 / DSM 28319 / BCRC 17069 / CCUG 31568 / BM 3577 / RP62A)).